We begin with the raw amino-acid sequence, 300 residues long: Ubiquinone biosynthesis protein COQ4, mitochondrial (300 aa).

Residues His-173, Asp-174, His-177, and Glu-189 each contribute to the Zn(2+) site.

It belongs to the COQ4 family. As to quaternary structure, component of a multi-subunit COQ enzyme complex, composed of at least COQ3, COQ4, COQ5, COQ6, COQ7 and COQ9. Zn(2+) serves as cofactor.

Its subcellular location is the mitochondrion inner membrane. It catalyses the reaction a 4-hydroxy-3-methoxy-5-(all-trans-polyprenyl)benzoate + H(+) = a 2-methoxy-6-(all-trans-polyprenyl)phenol + CO2. The protein operates within cofactor biosynthesis; ubiquinone biosynthesis. In terms of biological role, lyase that catalyzes the C1-decarboxylation of 4-hydroxy-3-methoxy-5-(all-trans-polyprenyl)benzoic acid into 2-methoxy-6-(all-trans-polyprenyl)phenol during ubiquinone biosynthesis. The polypeptide is Ubiquinone biosynthesis protein COQ4, mitochondrial (Cryptococcus neoformans var. neoformans serotype D (strain B-3501A) (Filobasidiella neoformans)).